The primary structure comprises 746 residues: MLLFGLLVAGVADGCDLVPRHLRGRRASGSAGAAASPSAAAAGERQALLTDPCMSLSPPCFTEEDRFSLEALQTIHKQMDDDKDGGIEVDESDEFIREDMKYKDATNKHSHLHREDKHITVEDLWKQWKTSEVHNWTLEDTLQWLIEFVELPQYEKNFRDNNVKGTTLPRIAVHETSFMISQLKISDRSHRQKLQLKALDVVLFGPLTRPPHNWMKDFILTISIVIGVGGCWFAYTQNKTSKEHVAKMMKDLESLQTAEQSLMDLQERLEKAQEENRTVAVEKQNLERKMMDEINYAKEEACRLRELREGAECELSRRQYAEQELEQVRMALKKAEKEFELRSSWSVPDALQKWLQLTHEVEVQYYNIKRQNAEMQLAIAKDEAEKIKKKRSTVFGTLHVAHSSSLDEVDHKILEAKKALSELTTCLRERLFRWQQIEKICGFQIAHNSGLPSLTSSLYSDHSWVVMPRVSIPPYPIAGGVDDLDEDTPPIVPQFPGTVAKPAGSLARSSSLCRSRRSIVPSSPQSQRAQLPAHAPLAAHPRHPHHPQHPQHSLPSPDPDILSVSSCPALYRNEEEEEAIYFTAEKQWEVPDTASECDSLNSSSGRKPSPPSSLEMYQTLSSRKISRDELSLEDSSRGESPVTADVSRGSPECVGLTETKSMIFSPASRVYNGILEKSCSMHQLSSGIPVPHPRHTSCSSAGNDSKPVQEASNVSRVSSIPHDLCHNGEKSKKPSKIKSLFKKKSK.

The N-terminal stretch at 1–14 is a signal peptide; that stretch reads MLLFGLLVAGVADG. The Extracellular portion of the chain corresponds to 15-218; that stretch reads CDLVPRHLRG…RPPHNWMKDF (204 aa). A Phosphoserine modification is found at serine 28. The region spanning 67–102 is the EF-hand domain; that stretch reads FSLEALQTIHKQMDDDKDGGIEVDESDEFIREDMKY. Ca(2+)-binding residues include aspartate 80, aspartate 82, aspartate 84, and glutamate 91. Residue asparagine 135 is glycosylated (N-linked (GlcNAc...) asparagine). The region spanning 136 to 204 is the SAM domain; sequence WTLEDTLQWL…QLKALDVVLF (69 aa). A helical membrane pass occupies residues 219–235; it reads ILTISIVIGVGGCWFAY. Over 236–746 the chain is Cytoplasmic; that stretch reads TQNKTSKEHV…IKSLFKKKSK (511 aa). Residues 247-394 adopt a coiled-coil conformation; the sequence is KMMKDLESLQ…EKIKKKRSTV (148 aa). 2 disordered regions span residues 490–562 and 592–651; these read PIVP…PDIL and DTAS…RGSP. Serine 523 bears the Phosphoserine mark. Residues 527–539 show a composition bias toward low complexity; the sequence is QRAQLPAHAPLAA. Positions 540 to 549 are enriched in basic residues; it reads HPRHPHHPQH. 2 positions are modified to phosphoserine: serine 609 and serine 621. Positions 625–637 are enriched in basic and acidic residues; that stretch reads ISRDELSLEDSSR. Phosphoserine occurs at positions 640, 650, 661, 665, 680, and 697. A disordered region spans residues 684–746; the sequence is LSSGIPVPHP…IKSLFKKKSK (63 aa). The span at 723 to 732 shows a compositional bias: basic and acidic residues; the sequence is DLCHNGEKSK. Over residues 733-746 the composition is skewed to basic residues; it reads KPSKIKSLFKKKSK.

As to quaternary structure, oligomer with STIM1. Interacts with ORAI1. Post-translationally, glycosylated. In terms of processing, phosphorylated predominantly on Ser residues.

It is found in the endoplasmic reticulum membrane. Plays a role in mediating store-operated Ca(2+) entry (SOCE), a Ca(2+) influx following depletion of intracellular Ca(2+) stores. Functions as a highly sensitive Ca(2+) sensor in the endoplasmic reticulum which activates both store-operated and store-independent Ca(2+)-influx. Regulates basal cytosolic and endoplasmic reticulum Ca(2+) concentrations. Upon mild variations of the endoplasmic reticulum Ca(2+) concentration, translocates from the endoplasmic reticulum to the plasma membrane where it probably activates the Ca(2+) release-activated Ca(2+) (CRAC) channels ORAI1, ORAI2 and ORAI3. May inhibit STIM1-mediated Ca(2+) influx. This chain is Stromal interaction molecule 2 (Stim2), found in Mus musculus (Mouse).